Here is a 501-residue protein sequence, read N- to C-terminus: CaM kinase-like vesicle-associated protein (501 aa).

The 263-residue stretch at 24–286 (YDLGQVIKTE…AEEAISHEWI (263 aa)) folds into the Protein kinase domain. Positions 327-501 (RAPEQSSTAA…AQESQREEAS (175 aa)) are disordered. Over residues 331 to 365 (QSSTAAAQSASATDTATPGAAGGATAAAASGATSA) the composition is skewed to low complexity. Residues 387–428 (TPATDGSATPATDGSVTPATDGSITPATDGSVTPATDRSATP) show a composition bias toward polar residues. T435 is modified (phosphothreonine). Positions 438–451 (TEESTVPTTQSSAM) are enriched in polar residues. T459 carries the post-translational modification Phosphothreonine.

It belongs to the protein kinase superfamily. CAMK Ser/Thr protein kinase family. In terms of assembly, interacts with calmodulin, in the presence of calcium. Requires Ca(2+) as cofactor.

It is found in the cell membrane. Its subcellular location is the cytoplasmic vesicle membrane. Functionally, does not appear to have detectable kinase activity. This Homo sapiens (Human) protein is CaM kinase-like vesicle-associated protein (CAMKV).